A 649-amino-acid polypeptide reads, in one-letter code: Glycerol-3-phosphate dehydrogenase, mitochondrial (649 aa).

Position 69 to 97 (69 to 97 (DVLIIGGGATGTGCALDAATRGLNVALVE)) interacts with FAD.

It belongs to the FAD-dependent glycerol-3-phosphate dehydrogenase family. The cofactor is FAD.

It localises to the mitochondrion inner membrane. The protein localises to the mitochondrion intermembrane space. It carries out the reaction a quinone + sn-glycerol 3-phosphate = dihydroxyacetone phosphate + a quinol. It participates in polyol metabolism; glycerol degradation via glycerol kinase pathway; glycerone phosphate from sn-glycerol 3-phosphate (anaerobic route): step 1/1. The protein is Glycerol-3-phosphate dehydrogenase, mitochondrial (GUT2) of Saccharomyces cerevisiae (strain ATCC 204508 / S288c) (Baker's yeast).